The chain runs to 270 residues: 3-methyl-2-oxobutanoate hydroxymethyltransferase (270 aa).

The Mg(2+) site is built by Asp-50 and Asp-89. Residues 50–51 (DS), Asp-89, and Lys-118 contribute to the 3-methyl-2-oxobutanoate site. Residue Glu-120 participates in Mg(2+) binding. The active-site Proton acceptor is the Glu-187.

The protein belongs to the PanB family. As to quaternary structure, homodecamer; pentamer of dimers. Mg(2+) is required as a cofactor.

It localises to the cytoplasm. It catalyses the reaction 3-methyl-2-oxobutanoate + (6R)-5,10-methylene-5,6,7,8-tetrahydrofolate + H2O = 2-dehydropantoate + (6S)-5,6,7,8-tetrahydrofolate. It participates in cofactor biosynthesis; (R)-pantothenate biosynthesis; (R)-pantoate from 3-methyl-2-oxobutanoate: step 1/2. Catalyzes the reversible reaction in which hydroxymethyl group from 5,10-methylenetetrahydrofolate is transferred onto alpha-ketoisovalerate to form ketopantoate. This Helicobacter pylori (strain ATCC 700392 / 26695) (Campylobacter pylori) protein is 3-methyl-2-oxobutanoate hydroxymethyltransferase.